A 100-amino-acid polypeptide reads, in one-letter code: NADH-quinone oxidoreductase subunit K (100 aa).

A run of 3 helical transmembrane segments spans residues 4 to 24 (LQHG…GLLI), 28 to 48 (LLFM…AFVV), and 60 to 80 (VMYI…LALL).

Belongs to the complex I subunit 4L family. As to quaternary structure, NDH-1 is composed of 13 different subunits. Subunits NuoA, H, J, K, L, M, N constitute the membrane sector of the complex.

It is found in the cell inner membrane. The enzyme catalyses a quinone + NADH + 5 H(+)(in) = a quinol + NAD(+) + 4 H(+)(out). In terms of biological role, NDH-1 shuttles electrons from NADH, via FMN and iron-sulfur (Fe-S) centers, to quinones in the respiratory chain. The immediate electron acceptor for the enzyme in this species is believed to be ubiquinone. Couples the redox reaction to proton translocation (for every two electrons transferred, four hydrogen ions are translocated across the cytoplasmic membrane), and thus conserves the redox energy in a proton gradient. The sequence is that of NADH-quinone oxidoreductase subunit K from Yersinia pseudotuberculosis serotype O:1b (strain IP 31758).